The sequence spans 475 residues: Splicing factor U2AF 65 kDa subunit (475 aa).

The segment at 1–90 (MSDFDEFERQ…RHEKKKKVRK (90 aa)) is disordered. An N-acetylserine modification is found at Ser-2. Ser-2 is modified (phosphoserine). Residues 2–93 (SDFDEFERQL…KKKKVRKYWD (92 aa)) are required for interaction with PRPF19. Residues 7 to 22 (FERQLNENKQERDKEN) are compositionally biased toward basic and acidic residues. Lys-15 carries the 5-hydroxylysine; by JMJD6; alternate modification. Lys-15 is covalently cross-linked (Glycyl lysine isopeptide (Lys-Gly) (interchain with G-Cter in SUMO2); alternate). Positions 17–47 (ERDKENRHRKRSHSRSRSRDRKRRSRSRDRR) are necessary and sufficient to stimulate pre-mRNAs 3'-end cleavage in a CFIm complex-dependent manner. Over residues 23 to 46 (RHRKRSHSRSRSRDRKRRSRSRDR) the composition is skewed to basic residues. Positions 47–56 (RNRDQRSASR) are enriched in basic and acidic residues. A Glycyl lysine isopeptide (Lys-Gly) (interchain with G-Cter in SUMO2); alternate cross-link involves residue Lys-70. Position 70 is an N6-acetyllysine; alternate (Lys-70). Ser-79 bears the Phosphoserine mark. The segment covering 79-89 (SPRHEKKKKVR) has biased composition (basic residues). RRM domains lie at 149 to 231 (RRLY…RPHD), 259 to 337 (HKLF…RASV), and 385 to 466 (LPEE…YCDP). Lys-276 is subject to 5-hydroxylysine; by JMJD6. Ser-294 is modified (phosphoserine).

The protein belongs to the splicing factor SR family. As to quaternary structure, interacts with U2AF1L4. Heterodimer with U2AF1. Binds unphosphorylated SF1. Interacts with SCAF11 and SNW1. Interacts with ZRSR2/U2AF1-RS2. Interacts with RBM17. Interacts with PRPF19; the interaction is direct. Interacts with POLR2A (via the C-terminal domain); recruits PRPF19 and the Prp19 complex to the pre-mRNA. Interacts with KHDC4 (Isoform 2). Interacts with ZRSR2. Interacts with the SF3B complex composed of SF3B1, SF3B2, SF3B3, SF3B4, SF3B5, SF3B6 and PHF5A. Interacts (via N-terminus) with CPSF7 (via C-terminus); this interaction stimulates pre-mRNA 3'-end processing by promoting the recruitment of the CFIm complex to cleavage and polyadenylation signals. Interacts with ARGLU1; interaction may be involved in ARGLU1-mediated modulation of alternative splicing. Post-translationally, lysyl-hydroxylation at Lys-15 and Lys-276 affects the mRNA splicing activity of the protein, leading to regulate some, but not all, alternative splicing events.

Its subcellular location is the nucleus. Plays a role in pre-mRNA splicing and 3'-end processing. By recruiting PRPF19 and the PRP19C/Prp19 complex/NTC/Nineteen complex to the RNA polymerase II C-terminal domain (CTD), and thereby pre-mRNA, may couple transcription to splicing. Induces cardiac troponin-T (TNNT2) pre-mRNA exon inclusion in muscle. Regulates the TNNT2 exon 5 inclusion through competition with MBNL1. Binds preferentially to a single-stranded structure within the polypyrimidine tract of TNNT2 intron 4 during spliceosome assembly. Required for the export of mRNA out of the nucleus, even if the mRNA is encoded by an intron-less gene. Represses the splicing of MAPT/Tau exon 10. Positively regulates pre-mRNA 3'-end processing by recruiting the CFIm complex to cleavage and polyadenylation signals. This is Splicing factor U2AF 65 kDa subunit (U2AF2) from Homo sapiens (Human).